The following is a 374-amino-acid chain: uncharacterized protein (374 aa).

The segment at 1 to 46 (MVNEEEKDLTAEGDSNNTGVSPDSIKNKTLDFYPKEKTTERKTRSR) is disordered. The segment covering 25–46 (IKNKTLDFYPKEKTTERKTRSR) has biased composition (basic and acidic residues). The next 6 helical transmembrane spans lie at 70–90 (YAYI…FIAA), 127–147 (WVFY…KIGI), 153–173 (TIVY…IPVI), 199–219 (IWLF…YGLV), 242–262 (ISIA…MLAI), and 312–332 (YFFG…AITI).

To M.genitalium MG432 and MG443.

It is found in the cell membrane. This is an uncharacterized protein from Spiroplasma citri.